Consider the following 1297-residue polypeptide: Phosphoribosylformylglycinamidine synthase (1297 aa).

Residues 307-318 (GASTGSGGEIRD) and Ala678 contribute to the ATP site. The Mg(2+) site is built by Glu718, Asn722, and Asp886. The Glutamine amidotransferase type-1 domain maps to 1044 to 1297 (MAILREQGVN…MFQNARKNLG (254 aa)). Cys1137 acts as the Nucleophile in catalysis. Residues His1262 and Glu1264 contribute to the active site.

This sequence in the N-terminal section; belongs to the FGAMS family. Monomer.

It localises to the cytoplasm. It catalyses the reaction N(2)-formyl-N(1)-(5-phospho-beta-D-ribosyl)glycinamide + L-glutamine + ATP + H2O = 2-formamido-N(1)-(5-O-phospho-beta-D-ribosyl)acetamidine + L-glutamate + ADP + phosphate + H(+). The protein operates within purine metabolism; IMP biosynthesis via de novo pathway; 5-amino-1-(5-phospho-D-ribosyl)imidazole from N(2)-formyl-N(1)-(5-phospho-D-ribosyl)glycinamide: step 1/2. Phosphoribosylformylglycinamidine synthase involved in the purines biosynthetic pathway. Catalyzes the ATP-dependent conversion of formylglycinamide ribonucleotide (FGAR) and glutamine to yield formylglycinamidine ribonucleotide (FGAM) and glutamate. The protein is Phosphoribosylformylglycinamidine synthase of Vibrio vulnificus (strain CMCP6).